We begin with the raw amino-acid sequence, 305 residues long: NK1 transcription factor-related protein 2 (305 aa).

Disordered stretches follow at residues 51–158 (EEVE…KPRR) and 210–257 (KWKK…PGAL). The span at 87–96 (SEAEEEEEAE) shows a compositional bias: acidic residues. Residues 97 to 115 (DAGRAHQPERWQGVHEGSP) are compositionally biased toward basic and acidic residues. Residues 129–140 (AEGLPASPGSPG) are compositionally biased toward low complexity. Residues 156–215 (PRRARTAFTYEQLVALENKFRATRYLSVCERLNLALSLSLTETQVKIWFQNRRTKWKKQN) constitute a DNA-binding region (homeobox).

Belongs to the NK-1 homeobox family. As to quaternary structure, interacts (via the homeodomain) with HIPK1, HIPK2, and HIPK3. Phosphorylated by HIPK2 in vitro. Expression detected in the brain, testis and spleen. In the testis, expressed in the germ cells of the seminiferous epithelium, predominantly in elongating spermatids and spermatozoa. Expressed throughout the brain with highest levels in regions of the cerebral cortex, hippocampus, diencephalon, pons, medulla and cerebellum.

The protein localises to the nucleus. It is found in the nucleolus. Functionally, transcriptional repressor. May play a role in early development as a Wnt/beta-catenin effector, hence controlling pluripotency and preimplantation development of embryonic stem cells. May promote adipogenesis in mesenchymal stem cells, possibly by inhibiting the expression of the antiadipogenic factor NR2F2. May inhibit osteoblastogenic differentiation. This Mus musculus (Mouse) protein is NK1 transcription factor-related protein 2 (Nkx1-2).